Consider the following 221-residue polypeptide: Probable chemoreceptor glutamine deamidase CheD 1 (221 aa).

The protein belongs to the CheD family.

It catalyses the reaction L-glutaminyl-[protein] + H2O = L-glutamyl-[protein] + NH4(+). In terms of biological role, probably deamidates glutamine residues to glutamate on methyl-accepting chemotaxis receptors (MCPs), playing an important role in chemotaxis. This is Probable chemoreceptor glutamine deamidase CheD 1 from Methanosarcina mazei (strain ATCC BAA-159 / DSM 3647 / Goe1 / Go1 / JCM 11833 / OCM 88) (Methanosarcina frisia).